The chain runs to 569 residues: Proline--tRNA ligase (569 aa).

This sequence belongs to the class-II aminoacyl-tRNA synthetase family. ProS type 1 subfamily. Homodimer.

It localises to the cytoplasm. The enzyme catalyses tRNA(Pro) + L-proline + ATP = L-prolyl-tRNA(Pro) + AMP + diphosphate. Functionally, catalyzes the attachment of proline to tRNA(Pro) in a two-step reaction: proline is first activated by ATP to form Pro-AMP and then transferred to the acceptor end of tRNA(Pro). As ProRS can inadvertently accommodate and process non-cognate amino acids such as alanine and cysteine, to avoid such errors it has two additional distinct editing activities against alanine. One activity is designated as 'pretransfer' editing and involves the tRNA(Pro)-independent hydrolysis of activated Ala-AMP. The other activity is designated 'posttransfer' editing and involves deacylation of mischarged Ala-tRNA(Pro). The misacylated Cys-tRNA(Pro) is not edited by ProRS. In Nitratiruptor sp. (strain SB155-2), this protein is Proline--tRNA ligase.